The primary structure comprises 171 residues: Cadmium-induced protein AS8 (171 aa).

This is Cadmium-induced protein AS8 from Arabidopsis thaliana (Mouse-ear cress).